The chain runs to 612 residues: uncharacterized protein (612 aa).

Positions 39 to 100 (ERDHNLWEIE…KNISVKDLDE (62 aa)) form a coiled coil. Residues 219 to 241 (PLSSGESLPKKEEEVTKSPSFTL) form a disordered region. WD repeat units lie at residues 286-325 (TSTQ…NDNS), 337-376 (GHEG…TSDS), 389-432 (GHED…FKIR), 434-470 (DSKQ…LVSQ), 483-523 (AVKD…LLAE), 526-565 (ISKV…STLE), and 574-612 (EEIT…KYLP).

It localises to the cytoplasm. This is an uncharacterized protein from Schizosaccharomyces pombe (strain 972 / ATCC 24843) (Fission yeast).